Here is a 331-residue protein sequence, read N- to C-terminus: Ornithine carbamoyltransferase (331 aa).

Residues S55–T58, Q82, R106, and H133–Q136 contribute to the carbamoyl phosphate site. L-ornithine is bound by residues N166, D230, and S234–M235. Carbamoyl phosphate is bound by residues C272–L273 and R317.

This sequence belongs to the aspartate/ornithine carbamoyltransferase superfamily. OTCase family.

It localises to the cytoplasm. It catalyses the reaction carbamoyl phosphate + L-ornithine = L-citrulline + phosphate + H(+). The protein operates within amino-acid biosynthesis; L-arginine biosynthesis; L-arginine from L-ornithine and carbamoyl phosphate: step 1/3. In terms of biological role, reversibly catalyzes the transfer of the carbamoyl group from carbamoyl phosphate (CP) to the N(epsilon) atom of ornithine (ORN) to produce L-citrulline. The chain is Ornithine carbamoyltransferase (argF) from Neisseria gonorrhoeae.